The chain runs to 418 residues: UDP-N-acetylglucosamine 1-carboxyvinyltransferase (418 aa).

22–23 lines the phosphoenolpyruvate pocket; sequence KN. Arginine 92 contributes to the UDP-N-acetyl-alpha-D-glucosamine binding site. Catalysis depends on cysteine 116, which acts as the Proton donor. The residue at position 116 (cysteine 116) is a 2-(S-cysteinyl)pyruvic acid O-phosphothioketal. Residues 121–125, aspartate 305, and leucine 327 contribute to the UDP-N-acetyl-alpha-D-glucosamine site; that span reads RPIDL.

Belongs to the EPSP synthase family. MurA subfamily.

It is found in the cytoplasm. It carries out the reaction phosphoenolpyruvate + UDP-N-acetyl-alpha-D-glucosamine = UDP-N-acetyl-3-O-(1-carboxyvinyl)-alpha-D-glucosamine + phosphate. Its pathway is cell wall biogenesis; peptidoglycan biosynthesis. Functionally, cell wall formation. Adds enolpyruvyl to UDP-N-acetylglucosamine. The protein is UDP-N-acetylglucosamine 1-carboxyvinyltransferase of Campylobacter jejuni (strain RM1221).